Consider the following 256-residue polypeptide: Small ribosomal subunit protein uS2 (256 aa).

The protein belongs to the universal ribosomal protein uS2 family.

This is Small ribosomal subunit protein uS2 from Streptococcus equi subsp. equi (strain 4047).